Reading from the N-terminus, the 121-residue chain is MARIAGVDIPREKRIVISLTYIYGIGKTKAQEILKAANVSEETRTRDLTEDELNRIREAIDGIKVEGDLRREVSLNIKRLIEIGAYRGIRHRRSLPVRGQNTKNNSRTRKGPRRTVANKKK.

Residues 94-121 form a disordered region; that stretch reads SLPVRGQNTKNNSRTRKGPRRTVANKKK. Over residues 106–121 the composition is skewed to basic residues; that stretch reads SRTRKGPRRTVANKKK.

It belongs to the universal ribosomal protein uS13 family. Part of the 30S ribosomal subunit. Forms a loose heterodimer with protein S19. Forms two bridges to the 50S subunit in the 70S ribosome.

In terms of biological role, located at the top of the head of the 30S subunit, it contacts several helices of the 16S rRNA. In the 70S ribosome it contacts the 23S rRNA (bridge B1a) and protein L5 of the 50S subunit (bridge B1b), connecting the 2 subunits; these bridges are implicated in subunit movement. Contacts the tRNAs in the A and P-sites. This Exiguobacterium sp. (strain ATCC BAA-1283 / AT1b) protein is Small ribosomal subunit protein uS13.